The primary structure comprises 266 residues: Tryptophan synthase alpha chain (266 aa).

Active-site proton acceptor residues include Glu51 and Asp62.

The protein belongs to the TrpA family. In terms of assembly, tetramer of two alpha and two beta chains.

The catalysed reaction is (1S,2R)-1-C-(indol-3-yl)glycerol 3-phosphate + L-serine = D-glyceraldehyde 3-phosphate + L-tryptophan + H2O. Its pathway is amino-acid biosynthesis; L-tryptophan biosynthesis; L-tryptophan from chorismate: step 5/5. In terms of biological role, the alpha subunit is responsible for the aldol cleavage of indoleglycerol phosphate to indole and glyceraldehyde 3-phosphate. The chain is Tryptophan synthase alpha chain from Prochlorococcus marinus (strain NATL1A).